A 749-amino-acid chain; its full sequence is Phosphate-regulating neutral endopeptidase PHEX (749 aa).

Residues 1–20 lie on the Cytoplasmic side of the membrane; that stretch reads MEAETGSSVETGKKANRGTR. The chain crosses the membrane as a helical; Signal-anchor for type II membrane protein span at residues 21 to 41; it reads IALVVFVGGTLVLGTILFLVS. The Extracellular segment spans residues 42-641; it reads QGLLSLQAKQ…LNVKGKRTLG (600 aa). A Peptidase M13 domain is found at 53–749; it reads YCLKPECIEA…NRGMDSCRLW (697 aa). A disulfide bond links Cys-54 and Cys-59. Residues Asn-71, Asn-238, Asn-263, Asn-290, Asn-301, Asn-377, and Asn-484 are each glycosylated (N-linked (GlcNAc...) asparagine). 4 cysteine pairs are disulfide-bonded: Cys-77/Cys-733, Cys-85/Cys-693, Cys-142/Cys-406, and Cys-617/Cys-746. His-580 contacts Zn(2+). Glu-581 is a catalytic residue. Residues His-584 and Glu-642 each coordinate Zn(2+). Asp-646 serves as the catalytic Proton donor. A glycan (N-linked (GlcNAc...) asparagine) is linked at Asn-736.

Belongs to the peptidase M13 family. As to quaternary structure, interacts with MEPE; the interaction is zinc-dependent (via ASARM motif). Zn(2+) serves as cofactor. In terms of tissue distribution, specifically expressed in ovary. Expressed at low levels in kidney.

It is found in the cell membrane. Functionally, peptidase that cleaves SIBLING (small integrin-binding ligand, N-linked glycoprotein)-derived ASARM peptides, thus regulating their biological activity. Cleaves ASARM peptides between Ser and Glu or Asp residues. Regulates osteogenic cell differentiation and bone mineralization through the cleavage of the MEPE-derived ASARM peptide. Promotes dentin mineralization and renal phosphate reabsorption by cleaving DMP1- and MEPE-derived ASARM peptides. Inhibits the cleavage of MEPE by CTSB/cathepsin B thus preventing MEPE degradation. This Homo sapiens (Human) protein is Phosphate-regulating neutral endopeptidase PHEX (PHEX).